Consider the following 208-residue polypeptide: RNA chaperone ProQ (208 aa).

2 stretches are compositionally biased toward basic and acidic residues: residues 99–115 (AQET…EKNK) and 126–135 (PAKDKPENTA). A disordered region spans residues 99–149 (AQETLKESKAKVAEKNKATNKAAAKKAPAKDKPENTAKAKPKTAKKPAKPK). Positions 137-149 (AKPKTAKKPAKPK) are enriched in basic residues.

This sequence belongs to the ProQ family.

The protein resides in the cytoplasm. Its function is as follows. RNA chaperone with significant RNA binding, RNA strand exchange and RNA duplexing activities. This is RNA chaperone ProQ from Idiomarina loihiensis (strain ATCC BAA-735 / DSM 15497 / L2-TR).